A 188-amino-acid chain; its full sequence is Elongation factor P (188 aa).

Residue K34 is modified to N6-(3,6-diaminohexanoyl)-5-hydroxylysine.

The protein belongs to the elongation factor P family. May be beta-lysylated on the epsilon-amino group of Lys-34 by the combined action of EpmA and EpmB, and then hydroxylated on the C5 position of the same residue by EpmC (if this protein is present). Lysylation is critical for the stimulatory effect of EF-P on peptide-bond formation. The lysylation moiety may extend toward the peptidyltransferase center and stabilize the terminal 3-CCA end of the tRNA. Hydroxylation of the C5 position on Lys-34 may allow additional potential stabilizing hydrogen-bond interactions with the P-tRNA.

The protein resides in the cytoplasm. Its pathway is protein biosynthesis; polypeptide chain elongation. Its function is as follows. Involved in peptide bond synthesis. Alleviates ribosome stalling that occurs when 3 or more consecutive Pro residues or the sequence PPG is present in a protein, possibly by augmenting the peptidyl transferase activity of the ribosome. Modification of Lys-34 is required for alleviation. The protein is Elongation factor P of Vibrio atlanticus (strain LGP32) (Vibrio splendidus (strain Mel32)).